Here is a 488-residue protein sequence, read N- to C-terminus: GTPase Der (488 aa).

2 EngA-type G domains span residues 3 to 166 (PVVA…AEAM) and 199 to 372 (IKLA…DSAT). GTP contacts are provided by residues 9-16 (GRPNVGKS), 56-60 (DTGGI), 118-121 (NKVD), 205-212 (GKPNVGKS), 252-256 (DTAGV), and 317-320 (NKWD). One can recognise a KH-like domain in the interval 373–457 (RRVSTSMLTR…PIQLRFQEGD (85 aa)). Positions 469 to 488 (MSQERRRKRALSHIKDRKTK) are disordered. Residues 473–488 (RRRKRALSHIKDRKTK) show a composition bias toward basic residues.

This sequence belongs to the TRAFAC class TrmE-Era-EngA-EngB-Septin-like GTPase superfamily. EngA (Der) GTPase family. Associates with the 50S ribosomal subunit.

Functionally, GTPase that plays an essential role in the late steps of ribosome biogenesis. The polypeptide is GTPase Der (Shewanella sp. (strain W3-18-1)).